Consider the following 378-residue polypeptide: Chaperone protein DnaJ (378 aa).

A J domain is found at 3-67 (DFYDTLGVNR…EKRARYDQFG (65 aa)). The CR-type zinc-finger motif lies at 132 to 214 (GQEREIKIPH…CGGQGVKQVR (83 aa)). Zn(2+) contacts are provided by Cys-145, Cys-148, Cys-162, Cys-165, Cys-188, Cys-191, Cys-202, and Cys-205. CXXCXGXG motif repeat units lie at residues 145 to 152 (CDVCRGTG), 162 to 169 (CSTCGGAG), 188 to 195 (CPTCSGSG), and 202 to 209 (CQSCGGQG).

The protein belongs to the DnaJ family. As to quaternary structure, homodimer. Requires Zn(2+) as cofactor.

It localises to the cytoplasm. Participates actively in the response to hyperosmotic and heat shock by preventing the aggregation of stress-denatured proteins and by disaggregating proteins, also in an autonomous, DnaK-independent fashion. Unfolded proteins bind initially to DnaJ; upon interaction with the DnaJ-bound protein, DnaK hydrolyzes its bound ATP, resulting in the formation of a stable complex. GrpE releases ADP from DnaK; ATP binding to DnaK triggers the release of the substrate protein, thus completing the reaction cycle. Several rounds of ATP-dependent interactions between DnaJ, DnaK and GrpE are required for fully efficient folding. Also involved, together with DnaK and GrpE, in the DNA replication of plasmids through activation of initiation proteins. In Prochlorococcus marinus (strain SARG / CCMP1375 / SS120), this protein is Chaperone protein DnaJ.